The chain runs to 462 residues: Envelope glycoprotein C (462 aa).

Residues 1-23 (MAPRGSGRLEAVVFAVMVLFCSG) form the signal peptide. Topologically, residues 24–433 (TSTATTAAAP…NMPLRQGRPM (410 aa)) are virion surface. Positions 29–38 (TAAAPASSPG) are enriched in low complexity. Residues 29–57 (TAAAPASSPGIQTSSPAPGTGSTRLPGTR) are disordered. Residues 39 to 57 (IQTSSPAPGTGSTRLPGTR) are compositionally biased toward polar residues. N-linked (GlcNAc...) asparagine; by host glycosylation is found at Asn66, Asn94, Asn136, Asn173, Asn249, and Asn417. Residues 434 to 454 (LICLAVVMGLFVLGSFLAVVI) form a helical membrane-spanning segment. Topologically, residues 455 to 462 (SACLWGSG) are cytoplasmic.

This sequence belongs to the herpesviridae glycoprotein C family.

It localises to the virion membrane. In Psittacid herpesvirus 1 (isolate Amazon parrot/-/97-0001/1997) (PsHV-1), this protein is Envelope glycoprotein C (gC).